We begin with the raw amino-acid sequence, 224 residues long: LexA repressor (224 aa).

A DNA-binding region (H-T-H motif) is located at residues 31 to 51 (RAEIAAELGFKSANAAEEHLQ). Residues S142 and K179 each act as for autocatalytic cleavage activity in the active site.

This sequence belongs to the peptidase S24 family. In terms of assembly, homodimer.

The catalysed reaction is Hydrolysis of Ala-|-Gly bond in repressor LexA.. In terms of biological role, represses a number of genes involved in the response to DNA damage (SOS response), including recA and lexA. In the presence of single-stranded DNA, RecA interacts with LexA causing an autocatalytic cleavage which disrupts the DNA-binding part of LexA, leading to derepression of the SOS regulon and eventually DNA repair. This is LexA repressor from Verminephrobacter eiseniae (strain EF01-2).